The following is a 165-amino-acid chain: Disulfide bond formation protein B (165 aa).

Over Met-1–Ser-16 the chain is Cytoplasmic. Residues Trp-17–Tyr-33 form a helical membrane-spanning segment. The Periplasmic segment spans residues Phe-34–Val-51. Residues Cys-43 and Cys-46 are joined by a disulfide bond. A helical membrane pass occupies residues Ala-52 to Pro-67. The Cytoplasmic portion of the chain corresponds to Asn-68–Trp-74. The chain crosses the membrane as a helical span at residues Leu-75–Gln-92. The Periplasmic portion of the chain corresponds to Gln-93–Gln-147. An intrachain disulfide couples Cys-107 to Cys-133. Residues Trp-148–Ile-165 form a helical membrane-spanning segment.

The protein belongs to the DsbB family.

It localises to the cell inner membrane. Its function is as follows. Required for disulfide bond formation in some periplasmic proteins. Acts by oxidizing the DsbA protein. This is Disulfide bond formation protein B from Vibrio alginolyticus.